The chain runs to 563 residues: Mitochondrial distribution and morphology protein 34 (563 aa).

The SMP-LTD domain maps to 1–195 (MAFNFNWSPL…LPAIIHRLSL (195 aa)). Disordered regions lie at residues 298-499 (ERGD…PHTP) and 531-563 (ARRQ…PKAL). Polar residues-rich tracts occupy residues 303–332 (AGTT…FSNR) and 346–357 (SLVNMNSATTGL). Basic residues predominate over residues 365–383 (SRSHPTRKKKNRVVNLRKP). Residues 386–407 (TESSESGESETASTTAVSEPTV) are compositionally biased toward low complexity. Polar residues-rich tracts occupy residues 458–471 (PSLT…INTQ) and 478–488 (YNQSASTSYTP). Residues 531–540 (ARRQHDDKTA) are compositionally biased toward basic and acidic residues.

It belongs to the MDM34 family. As to quaternary structure, component of the ER-mitochondria encounter structure (ERMES) or MDM complex, composed of MMM1, MDM10, MDM12 and MDM34.

Its subcellular location is the mitochondrion outer membrane. Component of the ERMES/MDM complex, which serves as a molecular tether to connect the endoplasmic reticulum (ER) and mitochondria. Components of this complex are involved in the control of mitochondrial shape and protein biogenesis, and function in nonvesicular lipid trafficking between the ER and mitochondria. MDM34 is required for the interaction of the ER-resident membrane protein MMM1 and the outer mitochondrial membrane-resident beta-barrel protein MDM10. The protein is Mitochondrial distribution and morphology protein 34 of Botryotinia fuckeliana (strain B05.10) (Noble rot fungus).